Reading from the N-terminus, the 1052-residue chain is Error-prone DNA polymerase (1052 aa).

Belongs to the DNA polymerase type-C family. DnaE2 subfamily.

It localises to the cytoplasm. It carries out the reaction DNA(n) + a 2'-deoxyribonucleoside 5'-triphosphate = DNA(n+1) + diphosphate. Functionally, DNA polymerase involved in damage-induced mutagenesis and translesion synthesis (TLS). It is not the major replicative DNA polymerase. The sequence is that of Error-prone DNA polymerase from Bordetella bronchiseptica (strain ATCC BAA-588 / NCTC 13252 / RB50) (Alcaligenes bronchisepticus).